Reading from the N-terminus, the 498-residue chain is WD repeat-containing protein 55 homolog (498 aa).

Residues 1-131 (MHTHNNFKTP…ATFDLDEDDE (131 aa)) form a disordered region. Composition is skewed to acidic residues over residues 12 to 23 (DEDELDDLDEDM) and 31 to 48 (IEQE…EYDL). WD repeat units follow at residues 154 to 193 (KLED…NKLL), 198 to 237 (VHSK…LKKL), 241 to 279 (AHDD…AIFE), 282 to 321 (ELED…MYVQ), 324 to 363 (PYEE…YHCD), and 408 to 447 (QHNM…DFGE).

Belongs to the WD repeat WDR55 family.

This chain is WD repeat-containing protein 55 homolog, found in Drosophila simulans (Fruit fly).